The sequence spans 384 residues: Putative glutamate--cysteine ligase 2 (384 aa).

The protein belongs to the glutamate--cysteine ligase type 2 family. YbdK subfamily.

The catalysed reaction is L-cysteine + L-glutamate + ATP = gamma-L-glutamyl-L-cysteine + ADP + phosphate + H(+). ATP-dependent carboxylate-amine ligase which exhibits weak glutamate--cysteine ligase activity. This chain is Putative glutamate--cysteine ligase 2, found in Ruegeria pomeroyi (strain ATCC 700808 / DSM 15171 / DSS-3) (Silicibacter pomeroyi).